A 602-amino-acid polypeptide reads, in one-letter code: Trichothecene efflux pump TRI12 (602 aa).

4 helical membrane-spanning segments follow: residues 49–69, 77–97, 107–127, and 134–154; these read LTLL…SFII, NVSL…LLMG, GFIL…LYSF, and IGAQ…ILFI. Asparagine 160 carries N-linked (GlcNAc...) asparagine glycosylation. 11 consecutive transmembrane segments (helical) span residues 164-184, 196-216, 240-260, 271-291, 297-317, 355-375, 380-400, 408-428, 450-470, 484-504, and 532-552; these read FLGN…GPYI, WIFY…FIFY, WIGA…VSWG, ILGL…YECY, PIIP…MLLI, STAG…FHIF, WQLI…ASVN, IAFS…TMLL, AICG…KFPG, WGFP…LTGQ, and AAAY…AIIA. Asparagine 590 is a glycosylation site (N-linked (GlcNAc...) asparagine).

The protein belongs to the major facilitator superfamily.

It is found in the cell membrane. Functionally, efflux pump that provides the dual role of trichothecene export and self-protection by allowing the fungus to evade the harmful effect of its own trichothecene production. This is Trichothecene efflux pump TRI12 from Trichoderma arundinaceum.